Consider the following 201-residue polypeptide: 3-isopropylmalate dehydratase small subunit (201 aa).

This sequence belongs to the LeuD family. LeuD type 1 subfamily. In terms of assembly, heterodimer of LeuC and LeuD.

It catalyses the reaction (2R,3S)-3-isopropylmalate = (2S)-2-isopropylmalate. It functions in the pathway amino-acid biosynthesis; L-leucine biosynthesis; L-leucine from 3-methyl-2-oxobutanoate: step 2/4. Catalyzes the isomerization between 2-isopropylmalate and 3-isopropylmalate, via the formation of 2-isopropylmaleate. This chain is 3-isopropylmalate dehydratase small subunit, found in Salmonella arizonae (strain ATCC BAA-731 / CDC346-86 / RSK2980).